The primary structure comprises 249 residues: Coproheme decarboxylase (249 aa).

Fe-coproporphyrin III is bound by residues Arg-131, 145 to 149, His-172, and Gln-185; that span reads YPMDK. Residue Tyr-145 is part of the active site.

This sequence belongs to the ChdC family. Type 1 subfamily. Requires Fe-coproporphyrin III as cofactor.

It catalyses the reaction Fe-coproporphyrin III + 2 H2O2 + 2 H(+) = heme b + 2 CO2 + 4 H2O. The catalysed reaction is Fe-coproporphyrin III + H2O2 + H(+) = harderoheme III + CO2 + 2 H2O. It carries out the reaction harderoheme III + H2O2 + H(+) = heme b + CO2 + 2 H2O. It functions in the pathway porphyrin-containing compound metabolism; protoheme biosynthesis. In terms of biological role, involved in coproporphyrin-dependent heme b biosynthesis. Catalyzes the decarboxylation of Fe-coproporphyrin III (coproheme) to heme b (protoheme IX), the last step of the pathway. The reaction occurs in a stepwise manner with a three-propionate intermediate. The sequence is that of Coproheme decarboxylase from Staphylococcus haemolyticus (strain JCSC1435).